A 262-amino-acid polypeptide reads, in one-letter code: Type III pantothenate kinase (262 aa).

6–13 (DVGNTNTV) is a binding site for ATP. Residues Y101 and 108–111 (GADR) contribute to the substrate site. D110 functions as the Proton acceptor in the catalytic mechanism. D130 is a K(+) binding site. T133 serves as a coordination point for ATP. Position 186 (T186) interacts with substrate.

The protein belongs to the type III pantothenate kinase family. Homodimer. It depends on NH4(+) as a cofactor. K(+) is required as a cofactor.

It localises to the cytoplasm. The enzyme catalyses (R)-pantothenate + ATP = (R)-4'-phosphopantothenate + ADP + H(+). Its pathway is cofactor biosynthesis; coenzyme A biosynthesis; CoA from (R)-pantothenate: step 1/5. Functionally, catalyzes the phosphorylation of pantothenate (Pan), the first step in CoA biosynthesis. The protein is Type III pantothenate kinase of Desulforapulum autotrophicum (strain ATCC 43914 / DSM 3382 / VKM B-1955 / HRM2) (Desulfobacterium autotrophicum).